Here is a 341-residue protein sequence, read N- to C-terminus: Cell division protein ZipA (341 aa).

At 1 to 6 (MENLQL) the chain is on the periplasmic side. Residues 7 to 27 (VLFVLGAIAIVAVLVHGFWSI) form a helical membrane-spanning segment. The Cytoplasmic segment spans residues 28-341 (RKQQPKSLKE…YLQRIRTQNS (314 aa)). Disordered stretches follow at residues 35–134 (LKES…PVLS) and 157–201 (QSSL…PEPE). Polar residues predominate over residues 90–100 (TLTSEGQMDSS). Over residues 175–190 (SIEVPEPVSEPVLESV) the composition is skewed to low complexity. The segment covering 192-201 (EPEPVAPEPE) has biased composition (pro residues).

The protein belongs to the ZipA family. As to quaternary structure, interacts with FtsZ via their C-terminal domains.

Its subcellular location is the cell inner membrane. Essential cell division protein that stabilizes the FtsZ protofilaments by cross-linking them and that serves as a cytoplasmic membrane anchor for the Z ring. Also required for the recruitment to the septal ring of downstream cell division proteins. This is Cell division protein ZipA from Shewanella sediminis (strain HAW-EB3).